Here is a 720-residue protein sequence, read N- to C-terminus: Methionine--tRNA ligase (720 aa).

Residues 27 to 37 (PYANGQIHIGH) carry the 'HIGH' region motif. The Zn(2+) site is built by Cys158, Cys161, Cys171, and Cys174. A 'KMSKS' region motif is present at residues 348 to 352 (KMSKS). Lys351 serves as a coordination point for ATP. One can recognise a tRNA-binding domain in the interval 614-720 (DFAKVDLRIA…SGAKPGMRVK (107 aa)).

It belongs to the class-I aminoacyl-tRNA synthetase family. MetG type 1 subfamily. Homodimer. Zn(2+) is required as a cofactor.

It localises to the cytoplasm. It carries out the reaction tRNA(Met) + L-methionine + ATP = L-methionyl-tRNA(Met) + AMP + diphosphate. Functionally, is required not only for elongation of protein synthesis but also for the initiation of all mRNA translation through initiator tRNA(fMet) aminoacylation. This is Methionine--tRNA ligase from Burkholderia ambifaria (strain ATCC BAA-244 / DSM 16087 / CCUG 44356 / LMG 19182 / AMMD) (Burkholderia cepacia (strain AMMD)).